The following is a 163-amino-acid chain: Cyanate hydratase (163 aa).

Active-site residues include Arg103, Glu106, and Ser129.

It belongs to the cyanase family.

It catalyses the reaction cyanate + hydrogencarbonate + 3 H(+) = NH4(+) + 2 CO2. Functionally, catalyzes the reaction of cyanate with bicarbonate to produce ammonia and carbon dioxide. This chain is Cyanate hydratase, found in Talaromyces stipitatus (strain ATCC 10500 / CBS 375.48 / QM 6759 / NRRL 1006) (Penicillium stipitatum).